The following is a 344-amino-acid chain: Phosphoribosylformylglycinamidine cyclo-ligase (344 aa).

This sequence belongs to the AIR synthase family.

It localises to the cytoplasm. The enzyme catalyses 2-formamido-N(1)-(5-O-phospho-beta-D-ribosyl)acetamidine + ATP = 5-amino-1-(5-phospho-beta-D-ribosyl)imidazole + ADP + phosphate + H(+). It functions in the pathway purine metabolism; IMP biosynthesis via de novo pathway; 5-amino-1-(5-phospho-D-ribosyl)imidazole from N(2)-formyl-N(1)-(5-phospho-D-ribosyl)glycinamide: step 2/2. The sequence is that of Phosphoribosylformylglycinamidine cyclo-ligase from Glaesserella parasuis serovar 5 (strain SH0165) (Haemophilus parasuis).